Here is a 380-residue protein sequence, read N- to C-terminus: MRILADENIPLVDAFFADQGSIRRLPGRAIDRAALAEVDVLLVRSVTEVSRAALAGSPVRFVGTCTIGTDHLDLDYFAEAGIAWSSAPGCNARGVVDYVLGCLLAMAEVRGADLAERTYGVVGAGQVGGRLVEVLRGLGWKVLVCDPPRQAREPDGEFVSLERLLAEADVISLHTPLNRDGEHPTRHLLDEPRLAALRPGTWLVNASRGAVVDNQALRRLLEGGADLEVALDVWEGEPQADPELAARCLIATPHIAGYSLEGKLRGTAQIYQAYCAWRGIAERVSLQDVLPETWLAGLQLNPGCDPAWALATLCRAVYDPRSDDAAFRRSLTGDSATRRAAFDALRKHYPPRREITGLRVATGGQAELQRVVRALGAQLV.

Residues S45 and T66 each contribute to the substrate site. Residues 126 to 127 (QV), D146, T175, 206 to 208 (ASR), and D232 each bind NAD(+). R208 is an active-site residue. Residue E237 is part of the active site. H254 acts as the Proton donor in catalysis. An NAD(+)-binding site is contributed by G257. Substrate is bound at residue Y258.

This sequence belongs to the D-isomer specific 2-hydroxyacid dehydrogenase family. PdxB subfamily. In terms of assembly, homodimer.

It is found in the cytoplasm. The enzyme catalyses 4-phospho-D-erythronate + NAD(+) = (R)-3-hydroxy-2-oxo-4-phosphooxybutanoate + NADH + H(+). The protein operates within cofactor biosynthesis; pyridoxine 5'-phosphate biosynthesis; pyridoxine 5'-phosphate from D-erythrose 4-phosphate: step 2/5. In terms of biological role, catalyzes the oxidation of erythronate-4-phosphate to 3-hydroxy-2-oxo-4-phosphonooxybutanoate. The protein is Erythronate-4-phosphate dehydrogenase of Pseudomonas paraeruginosa (strain DSM 24068 / PA7) (Pseudomonas aeruginosa (strain PA7)).